The primary structure comprises 231 residues: Large ribosomal subunit protein uL1 (231 aa).

Belongs to the universal ribosomal protein uL1 family. As to quaternary structure, part of the 50S ribosomal subunit.

Its function is as follows. Binds directly to 23S rRNA. The L1 stalk is quite mobile in the ribosome, and is involved in E site tRNA release. Functionally, protein L1 is also a translational repressor protein, it controls the translation of the L11 operon by binding to its mRNA. The protein is Large ribosomal subunit protein uL1 of Dechloromonas aromatica (strain RCB).